Here is a 96-residue protein sequence, read N- to C-terminus: U-stichotoxin-Hau2b (96 aa).

The N-terminal stretch at 1 to 18 (MKPIFIVALLFSTCLVNA) is a signal peptide. Propeptides lie at residues 19–29 (KPSIDDAEMKR) and 30–33 (EPKP). Disulfide bonds link C40/C51 and C43/C58. 2 propeptides span residues 62–64 (RKR) and 65–68 (EPKP). 2 disulfide bridges follow: C75-C86 and C78-C93.

The protein belongs to the sea anemone BBH family.

The protein resides in the secreted. It localises to the nematocyst. Neurotoxin that paralyzes freshwater crabs at high concentration. This Heteractis aurora (Banded sea anemone) protein is U-stichotoxin-Hau2b.